A 281-amino-acid chain; its full sequence is Acidic leucine-rich nuclear phosphoprotein 32-related protein (281 aa).

LRR repeat units follow at residues 29–52 (YESL…EKEL), 56–78 (FKNL…IPSI), 79–103 (ATLN…IVQN), and 105–128 (PNIK…TLKE). One can recognise an LRRCT domain in the interval 140–178 (NPFADNPNYRKELFEFLPNVKIIDCYNKEGMEVLSSDEE). Positions 197–244 (FKDEDDEDEEFVPNDNEDDDEDDELDDDLEDEDMEDLDKEDLDKEDYD) are enriched in acidic residues. The segment at 197–281 (FKDEDDEDEE…DMDLKKTKLE (85 aa)) is disordered. A compositionally biased stretch (basic and acidic residues) spans 245–266 (IDTKETEGVNKDEKSNKRKQDA).

The protein belongs to the ANP32 family.

The polypeptide is Acidic leucine-rich nuclear phosphoprotein 32-related protein (Plasmodium falciparum (isolate 3D7)).